The primary structure comprises 165 residues: UPF0669 protein v1g209471 (165 aa).

An N-terminal signal peptide occupies residues 1–23 (MQGRYSAPLFLLLWLFFLHGTLC). An N-linked (GlcNAc...) asparagine glycan is attached at N38.

It belongs to the UPF0669 family.

It is found in the secreted. This Nematostella vectensis (Starlet sea anemone) protein is UPF0669 protein v1g209471.